The following is a 308-amino-acid chain: D-alanine--D-alanine ligase (308 aa).

Positions 103–302 constitute an ATP-grasp domain; the sequence is KTVMATAGVP…FDELVQWMVE (200 aa). 130-184 serves as a coordination point for ATP; the sequence is MAPPYVIKPVADGSSVGVFMVTEAHEHPPQELFRDDWPHGEQLLVEKYVAGKELT. The Mg(2+) site is built by aspartate 252, glutamate 269, and asparagine 271.

The protein belongs to the D-alanine--D-alanine ligase family. Mg(2+) is required as a cofactor. It depends on Mn(2+) as a cofactor.

It localises to the cytoplasm. It catalyses the reaction 2 D-alanine + ATP = D-alanyl-D-alanine + ADP + phosphate + H(+). Its pathway is cell wall biogenesis; peptidoglycan biosynthesis. Functionally, cell wall formation. In Rhodopseudomonas palustris (strain BisB18), this protein is D-alanine--D-alanine ligase.